The primary structure comprises 338 residues: Anthranilate phosphoribosyltransferase (338 aa).

Residues Gly-81, 84–85 (GD), Thr-89, 91–94 (NIST), 109–117 (KHGNRAQSS), and Thr-121 each bind 5-phospho-alpha-D-ribose 1-diphosphate. Gly-81 contacts anthranilate. Ser-93 contributes to the Mg(2+) binding site. Residue Asn-112 coordinates anthranilate. Arg-167 contacts anthranilate. Mg(2+) contacts are provided by Asp-225 and Glu-226.

It belongs to the anthranilate phosphoribosyltransferase family. In terms of assembly, homodimer. Mg(2+) serves as cofactor.

The enzyme catalyses N-(5-phospho-beta-D-ribosyl)anthranilate + diphosphate = 5-phospho-alpha-D-ribose 1-diphosphate + anthranilate. It participates in amino-acid biosynthesis; L-tryptophan biosynthesis; L-tryptophan from chorismate: step 2/5. Functionally, catalyzes the transfer of the phosphoribosyl group of 5-phosphorylribose-1-pyrophosphate (PRPP) to anthranilate to yield N-(5'-phosphoribosyl)-anthranilate (PRA). The polypeptide is Anthranilate phosphoribosyltransferase (Rhizobium rhizogenes (strain K84 / ATCC BAA-868) (Agrobacterium radiobacter)).